The primary structure comprises 199 residues: NADH-quinone oxidoreductase subunit C (199 aa).

The protein belongs to the complex I 30 kDa subunit family. As to quaternary structure, NDH-1 is composed of 14 different subunits. Subunits NuoB, C, D, E, F, and G constitute the peripheral sector of the complex.

The protein localises to the cell inner membrane. It catalyses the reaction a quinone + NADH + 5 H(+)(in) = a quinol + NAD(+) + 4 H(+)(out). In terms of biological role, NDH-1 shuttles electrons from NADH, via FMN and iron-sulfur (Fe-S) centers, to quinones in the respiratory chain. The immediate electron acceptor for the enzyme in this species is believed to be ubiquinone. Couples the redox reaction to proton translocation (for every two electrons transferred, four hydrogen ions are translocated across the cytoplasmic membrane), and thus conserves the redox energy in a proton gradient. This Paramagnetospirillum magneticum (strain ATCC 700264 / AMB-1) (Magnetospirillum magneticum) protein is NADH-quinone oxidoreductase subunit C.